The primary structure comprises 486 residues: Receptor-interacting serine/threonine-protein kinase 3 (486 aa).

Serine 2 is subject to Phosphoserine. A Protein kinase domain is found at 22–292 (LKKLEFVGKG…DCEPKTNEVY (271 aa)). ATP-binding positions include 28–36 (VGKGGFGVV) and lysine 51. Aspartate 143 serves as the catalytic Proton acceptor. A Phosphoserine modification is found at serine 165. Threonine 187 carries the post-translational modification Phosphothreonine. Phosphoserine; by autocatalysis is present on serine 204. Position 231 is a phosphothreonine; by autocatalysis (threonine 231). Position 232 is a phosphoserine; by autocatalysis (serine 232). At threonine 257 the chain carries Phosphothreonine. A phosphoserine mark is found at serine 304 and serine 326. The disordered stretch occupies residues 312-333 (QHRSSGRNLSAREPSQRGTEMD). At threonine 338 the chain carries Phosphothreonine. Residues 349-388 (LEEPSGPVPGKCPERQAQDTSVGPATPARTSSDPVAGTPQ) are disordered. Phosphoserine occurs at positions 353, 369, and 380. The span at 366–381 (QDTSVGPATPARTSSD) shows a compositional bias: polar residues. Threonine 392 is modified (phosphothreonine). The RIP homotypic interaction motif (RHIM) motif lies at 440-461 (LVFNNCSEVQIGNYNSLVAPPR). The tract at residues 462–486 (TTASSSAKYDQAQFGRGRGWQPFHK) is disordered. Arginine 477 carries the omega-N-methylarginine modification.

The protein belongs to the protein kinase superfamily. TKL Ser/Thr protein kinase family. As to quaternary structure, interacts (via RIP homotypic interaction motif) with RIPK1 (via RIP homotypic interaction motif); this interaction induces RIPK1 phosphorylation and formation of a RIPK1-RIPK3 necrosis-inducing complex. Interacts with MLKL; the interaction is direct and triggers necroptosis. Interacts with ZBP1 (via RIP homotypic interaction motif); interaction with ZBP1 activates RIPK3, triggering necroptosis. Upon TNF-induced necrosis, the RIPK1-RIPK3 dimer further interacts with PGAM5 and MLKL; the formation of this complex leads to PGAM5 phosphorylation and increase in PGAM5 phosphatase activity. Binds TRAF2 and is recruited to the TNFR-1 signaling complex. Interacts with PYGL, GLUL and GLUD1; these interactions result in activation of these metabolic enzymes. Interacts with BIRC2/c-IAP1, BIRC3/c-IAP2 and XIAP/BIRC4. Interacts with ARHGEF2. Interacts with PELI1 (via atypical FHA domain); the phosphorylated form at Thr-187 binds preferentially to PELI1. Interacts with BUB1B, TRAF2 and STUB1. Interacts with CASP6. Component of the AIM2 PANoptosome complex, a multiprotein complex that drives inflammatory cell death (PANoptosis). In terms of assembly, (Microbial infection) Interacts (via RIP homotypic interaction motif) with murid herpesvirus protein RIR1; this interaction disrupts RIP3-RIP1 interactions characteristic of TNF-alpha induced necroptosis, thereby suppressing this death pathway. RIPK1 and RIPK3 undergo reciprocal auto- and trans-phosphorylation. Autophosphorylated following interaction with ZBP1. Phosphorylation of Ser-204 plays a role in the necroptotic function of RIPK3. Autophosphorylates at Thr-231 and Ser-232 following activation by ZBP1: phosphorylation at these sites is a hallmark of necroptosis and is required for binding MLKL. Phosphorylation at Thr-187 is important for its kinase activity, interaction with PELI1 and for its ability to mediate TNF-induced necroptosis. In terms of processing, polyubiquitinated with 'Lys-48' and 'Lys-63'-linked chains by BIRC2/c-IAP1 and BIRC3/c-IAP2, leading to activation of NF-kappa-B. Ubiquitinated by STUB1 leading to its subsequent proteasome-dependent degradation. Expressed in embryo and in adult spleen, liver, testis, heart, brain and lung.

Its subcellular location is the cytoplasm. The protein resides in the cytosol. It is found in the nucleus. The catalysed reaction is L-seryl-[protein] + ATP = O-phospho-L-seryl-[protein] + ADP + H(+). It carries out the reaction L-threonyl-[protein] + ATP = O-phospho-L-threonyl-[protein] + ADP + H(+). Activity is stimulated by ZBP1, which senses double-stranded Z-RNA structures. RIPK3-dependent necroptosis is inhibited by RIPK1: RIPK1 prevents the ZBP1-induced activation of RIPK3 via FADD-mediated recruitment of CASP8, which cleaves RIPK1 and limits TNF-induced necroptosis. Inhibited by type II inhibitor 1-(4-fluorophenyl)-N-[3-fluoro-4-(1H-pyrrolo[2,3-b]pyridin-4-yloxy)phenyl]-2-oxo-1,2-dihydropyridine-3-carboxamide. In terms of biological role, serine/threonine-protein kinase that activates necroptosis and apoptosis, two parallel forms of cell death. Necroptosis, a programmed cell death process in response to death-inducing TNF-alpha family members, is triggered by RIPK3 following activation by ZBP1. Activated RIPK3 forms a necrosis-inducing complex and mediates phosphorylation of MLKL, promoting MLKL localization to the plasma membrane and execution of programmed necrosis characterized by calcium influx and plasma membrane damage. In addition to TNF-induced necroptosis, necroptosis can also take place in the nucleus in response to orthomyxoviruses infection: following ZBP1 activation, which senses double-stranded Z-RNA structures, nuclear RIPK3 catalyzes phosphorylation and activation of MLKL, promoting disruption of the nuclear envelope and leakage of cellular DNA into the cytosol. Also regulates apoptosis: apoptosis depends on RIPK1, FADD and CASP8, and is independent of MLKL and RIPK3 kinase activity. Phosphorylates RIPK1: RIPK1 and RIPK3 undergo reciprocal auto- and trans-phosphorylation. In some cell types, also able to restrict viral replication by promoting cell death-independent responses. In response to flavivirus infection in neurons, promotes a cell death-independent pathway that restricts viral replication: together with ZBP1, promotes a death-independent transcriptional program that modifies the cellular metabolism via up-regulation expression of the enzyme ACOD1/IRG1 and production of the metabolite itaconate. Itaconate inhibits the activity of succinate dehydrogenase, generating a metabolic state in neurons that suppresses replication of viral genomes. RIPK3 binds to and enhances the activity of three metabolic enzymes: GLUL, GLUD1, and PYGL. These metabolic enzymes may eventually stimulate the tricarboxylic acid cycle and oxidative phosphorylation, which could result in enhanced ROS production. The polypeptide is Receptor-interacting serine/threonine-protein kinase 3 (Mus musculus (Mouse)).